A 44-amino-acid polypeptide reads, in one-letter code: Metallothionein-4 (44 aa).

Belongs to the metallothionein superfamily. Type 5 family.

Its function is as follows. This protein binds cations of several transition elements. Thought to be involved in metal ion homeostasis. The chain is Metallothionein-4 (MtnD) from Drosophila melanogaster (Fruit fly).